Here is a 639-residue protein sequence, read N- to C-terminus: tRNA 5-methylaminomethyl-2-thiouridine biosynthesis bifunctional protein MnmC (639 aa).

Residues 1–228 (MSEPIEWLED…KRDNLQATYA (228 aa)) are tRNA (mnm(5)s(2)U34)-methyltransferase. The interval 254 to 639 (VGAGLAGAAV…SERWLGYEPQ (386 aa)) is FAD-dependent cmnm(5)s(2)U34 oxidoreductase.

The protein in the N-terminal section; belongs to the methyltransferase superfamily. tRNA (mnm(5)s(2)U34)-methyltransferase family. This sequence in the C-terminal section; belongs to the DAO family. FAD is required as a cofactor.

It is found in the cytoplasm. The enzyme catalyses 5-aminomethyl-2-thiouridine(34) in tRNA + S-adenosyl-L-methionine = 5-methylaminomethyl-2-thiouridine(34) in tRNA + S-adenosyl-L-homocysteine + H(+). Catalyzes the last two steps in the biosynthesis of 5-methylaminomethyl-2-thiouridine (mnm(5)s(2)U) at the wobble position (U34) in tRNA. Catalyzes the FAD-dependent demodification of cmnm(5)s(2)U34 to nm(5)s(2)U34, followed by the transfer of a methyl group from S-adenosyl-L-methionine to nm(5)s(2)U34, to form mnm(5)s(2)U34. The sequence is that of tRNA 5-methylaminomethyl-2-thiouridine biosynthesis bifunctional protein MnmC from Acidovorax sp. (strain JS42).